The following is a 993-amino-acid chain: DNA-binding protein SMUBP-2 (993 aa).

Position 2 is an N-acetylalanine (Ala-2). Residues 213-220, Gln-402, Tyr-441, and Glu-570 each bind ATP; that span reads GPPGTGKT. The segment at 637 to 783 is SS DNA-binding; it reads TAFEYLDDIV…KARHITVSRR (147 aa). Disordered stretches follow at residues 650 to 723, 765 to 815, and 837 to 872; these read YTHE…GPDR, LRHD…EPVT, and RQQSSQAQTAKGQPGGDSRPQKASQKKKKKEPKGPV. 2 stretches are compositionally biased toward polar residues: residues 667–683 and 703–716; these read PSTSIRKPASDQESGQE and HVQSQHSSSANGSD. Residues 721-784 form the R3H domain; that stretch reads PDRTEHFRAT…ARHITVSRRS (64 aa). A compositionally biased stretch (basic and acidic residues) spans 765–775; sequence LRHDSTGEGKA. Over residues 784 to 794 the composition is skewed to low complexity; it reads SPASSGSVAPQ. Phosphoserine is present on residues Ser-797 and Ser-800. Positions 837–847 are enriched in polar residues; the sequence is RQQSSQAQTAK. Residues 862–866 carry the Nuclear localization signal motif; sequence KKKKK. Residues 889–938 form an AN1-type; degenerate zinc finger; the sequence is VKADNTCSFSKCSVSTTTLGQFCMHCSHRYYLSHHLPEIHGCGEKARAHA. Cys-911, Cys-914, His-928, and Cys-930 together coordinate Zn(2+). Positions 953–993 are disordered; the sequence is GTKDRALDPAKRAQLQRRLDKKLGELSSQRTSRKKEKERGT. Residues 954–976 are compositionally biased toward basic and acidic residues; that stretch reads TKDRALDPAKRAQLQRRLDKKLG.

This sequence belongs to the DNA2/NAM7 helicase family. As to quaternary structure, homooligomer. Interacts with RUVBL1. Interacts with RUVBL2. Interacts with GTF3C1. Interacts with ABT1. Interacts with ribosomes. In terms of tissue distribution, in all tissues examined.

It is found in the nucleus. Its subcellular location is the cytoplasm. It localises to the cell projection. The protein localises to the axon. It catalyses the reaction ATP + H2O = ADP + phosphate + H(+). In terms of biological role, 5' to 3' helicase that unwinds RNA and DNA duplexes in an ATP-dependent reaction. Specific to 5'-phosphorylated single-stranded guanine-rich sequences. May play a role in RNA metabolism, ribosome biogenesis or initiation of translation. May play a role in regulation of transcription. Interacts with tRNA-Tyr. The sequence is that of DNA-binding protein SMUBP-2 (Ighmbp2) from Mus musculus (Mouse).